The sequence spans 274 residues: Speedy protein C (274 aa).

Residues 37–169 form a speedy/Ringo box; Required for CDK-binding region; that stretch reads HQEVQAFLSL…FHWAWTRDRR (133 aa).

This sequence belongs to the Speedy/Ringo family. In terms of assembly, interacts with CDK1 and CDK2. Interacts with AURKB. Expressed in a variety of tissues including bone marrow, kidney, small intestine, liver, placenta and testis.

Its subcellular location is the cytoplasm. Functionally, promotes progression through the cell cycle via binding and activation of CDK1 and CDK2. Involved in the spindle-assembly checkpoint. Required for recruitment of MAD2L1, BUBR1 and BUB1 to kinetochores. Required for the correct localization of the active form of Aurora B in prometaphase. The chain is Speedy protein C from Homo sapiens (Human).